We begin with the raw amino-acid sequence, 383 residues long: Succinyl-diaminopimelate desuccinylase (383 aa).

Residue H73 participates in Zn(2+) binding. The active site involves D75. A Zn(2+)-binding site is contributed by D107. E141 functions as the Proton acceptor in the catalytic mechanism. E142, E170, and H356 together coordinate Zn(2+).

This sequence belongs to the peptidase M20A family. DapE subfamily. Homodimer. Requires Zn(2+) as cofactor. The cofactor is Co(2+).

It carries out the reaction N-succinyl-(2S,6S)-2,6-diaminopimelate + H2O = (2S,6S)-2,6-diaminopimelate + succinate. Its pathway is amino-acid biosynthesis; L-lysine biosynthesis via DAP pathway; LL-2,6-diaminopimelate from (S)-tetrahydrodipicolinate (succinylase route): step 3/3. Catalyzes the hydrolysis of N-succinyl-L,L-diaminopimelic acid (SDAP), forming succinate and LL-2,6-diaminopimelate (DAP), an intermediate involved in the bacterial biosynthesis of lysine and meso-diaminopimelic acid, an essential component of bacterial cell walls. The polypeptide is Succinyl-diaminopimelate desuccinylase (Pseudomonas entomophila (strain L48)).